The primary structure comprises 412 residues: Multifunctional CCA protein (412 aa).

The ATP site is built by Gly-8 and Arg-11. 2 residues coordinate CTP: Gly-8 and Arg-11. Mg(2+) is bound by residues Asp-21 and Asp-23. Residues Arg-91, Arg-137, and Arg-140 each contribute to the ATP site. The CTP site is built by Arg-91, Arg-137, and Arg-140. Residues 228-329 enclose the HD domain; the sequence is TGIHTMMVLA…LKVFDKADAW (102 aa).

Belongs to the tRNA nucleotidyltransferase/poly(A) polymerase family. Bacterial CCA-adding enzyme type 1 subfamily. Monomer. Can also form homodimers and oligomers. The cofactor is Mg(2+). Ni(2+) is required as a cofactor.

It carries out the reaction a tRNA precursor + 2 CTP + ATP = a tRNA with a 3' CCA end + 3 diphosphate. The catalysed reaction is a tRNA with a 3' CCA end + 2 CTP + ATP = a tRNA with a 3' CCACCA end + 3 diphosphate. In terms of biological role, catalyzes the addition and repair of the essential 3'-terminal CCA sequence in tRNAs without using a nucleic acid template. Adds these three nucleotides in the order of C, C, and A to the tRNA nucleotide-73, using CTP and ATP as substrates and producing inorganic pyrophosphate. tRNA 3'-terminal CCA addition is required both for tRNA processing and repair. Also involved in tRNA surveillance by mediating tandem CCA addition to generate a CCACCA at the 3' terminus of unstable tRNAs. While stable tRNAs receive only 3'-terminal CCA, unstable tRNAs are marked with CCACCA and rapidly degraded. The polypeptide is Multifunctional CCA protein (Aeromonas hydrophila subsp. hydrophila (strain ATCC 7966 / DSM 30187 / BCRC 13018 / CCUG 14551 / JCM 1027 / KCTC 2358 / NCIMB 9240 / NCTC 8049)).